The chain runs to 282 residues: Bifunctional protein FolD (282 aa).

Residues 163 to 165 (NRS), T188, and I229 each bind NADP(+).

Belongs to the tetrahydrofolate dehydrogenase/cyclohydrolase family. As to quaternary structure, homodimer.

The catalysed reaction is (6R)-5,10-methylene-5,6,7,8-tetrahydrofolate + NADP(+) = (6R)-5,10-methenyltetrahydrofolate + NADPH. It carries out the reaction (6R)-5,10-methenyltetrahydrofolate + H2O = (6R)-10-formyltetrahydrofolate + H(+). It functions in the pathway one-carbon metabolism; tetrahydrofolate interconversion. In terms of biological role, catalyzes the oxidation of 5,10-methylenetetrahydrofolate to 5,10-methenyltetrahydrofolate and then the hydrolysis of 5,10-methenyltetrahydrofolate to 10-formyltetrahydrofolate. This chain is Bifunctional protein FolD, found in Malacoplasma penetrans (strain HF-2) (Mycoplasma penetrans).